The primary structure comprises 108 residues: uncharacterized protein (108 aa).

3 helical membrane-spanning segments follow: residues 24–44 (LWITLVLTLFFTIVEIVGGLL), 55–75 (AHMASDVLALGLSMIALYLAM), and 88–108 (RFEIITSFLNGLTLAIISIGI).

To cation A.eutrophus efflux system protein CzcD.

It localises to the cell membrane. This is an uncharacterized protein from Geobacillus stearothermophilus (Bacillus stearothermophilus).